A 277-amino-acid polypeptide reads, in one-letter code: Large ribosomal subunit protein uL2 (277 aa).

Disordered regions lie at residues 37-59 and 221-265; these read KNST…GGHK and RGTA…KRTD. Residues 50–59 show a composition bias toward basic residues; the sequence is TTRHRGGGHK. Over residues 229–241 the composition is skewed to basic and acidic residues; the sequence is DHPHGGGEGRTGE.

This sequence belongs to the universal ribosomal protein uL2 family. In terms of assembly, part of the 50S ribosomal subunit. Forms a bridge to the 30S subunit in the 70S ribosome.

In terms of biological role, one of the primary rRNA binding proteins. Required for association of the 30S and 50S subunits to form the 70S ribosome, for tRNA binding and peptide bond formation. It has been suggested to have peptidyltransferase activity; this is somewhat controversial. Makes several contacts with the 16S rRNA in the 70S ribosome. This Chromobacterium violaceum (strain ATCC 12472 / DSM 30191 / JCM 1249 / CCUG 213 / NBRC 12614 / NCIMB 9131 / NCTC 9757 / MK) protein is Large ribosomal subunit protein uL2.